A 436-amino-acid chain; its full sequence is uncharacterized protein (436 aa).

This is an uncharacterized protein from Treponema pallidum (strain Nichols).